The primary structure comprises 217 residues: Protein 33K (217 aa).

The segment at 1-142 (MPPKGNKQAI…KEKTSAIATR (142 aa)) is disordered. The span at 24–68 (QWDEEEESWDDSQAEEVSDEEEMESWESLDEELEDKPPKDEEEEI) shows a compositional bias: acidic residues. Positions 69–78 (IASAAAPSSK) are enriched in low complexity. Basic and acidic residues predominate over residues 123–136 (KRSEKTTRPRKEKT). The tract at residues 160 to 187 (YAIFQQSRGQQLELKVKNRSLRSLTRSC) is necessary for nuclear subcellular location. The tract at residues 166–186 (SRGQQLELKVKNRSLRSLTRS) is RS-repeat; required for splicing enhancer activity.

Belongs to the adenoviridae splicing factor family. As to quaternary structure, homooligomer. Interacts with DBP; this interaction occurs at a unique vertex during genome packaging. Interacts with IVa2; this interaction occurs at a unique vertex during genome packaging and seems to potentiate IVa2 and 33K oligomerization. In terms of processing, phosphorylated in vitro by human PKA and PRKDC. PRKDC inhibits, whereas PKA activates the splicing factor.

It localises to the host nucleus. Promotes alternative splicing of late transcripts by promoting splicing at weak 3' splice sites. Required for the temporal activation of major late pre-mRNA splicing at late times of infection. Induces the splicing and expression of the late capsid vertex protein. Functionally, probably functions as the small terminase that is part of the molecular motor that translocates genomic DNA in empty capsid during DNA packaging. This motor is located at a unique vertex and comprises at least the IVa2 ATPase, the small terminase 33K and probably a portal. Forms a ring-like structure of about 17 nm in which genomic DNA is translocated into the capsid. Stimulates IVa2 ATPase activity in the presence of the viral genome. Once the DNA is packaged, the terminase detaches: the 33K protein is present in the empty particles, but not in the mature virions. Also involved in virion assembly. The polypeptide is Protein 33K (Human adenovirus F serotype 41 (HAdV-41)).